The chain runs to 289 residues: Nitrogenase iron protein (289 aa).

8 to 15 (GKGGIGKS) contacts ATP. Cys96 contacts [4Fe-4S] cluster. An ADP-ribosylarginine; by dinitrogenase reductase ADP-ribosyltransferase modification is found at Arg99. Cys130 serves as a coordination point for [4Fe-4S] cluster.

The protein belongs to the NifH/BchL/ChlL family. Homodimer. [4Fe-4S] cluster serves as cofactor. Post-translationally, the reversible ADP-ribosylation of Arg-99 inactivates the nitrogenase reductase and regulates nitrogenase activity.

It carries out the reaction N2 + 8 reduced [2Fe-2S]-[ferredoxin] + 16 ATP + 16 H2O = H2 + 8 oxidized [2Fe-2S]-[ferredoxin] + 2 NH4(+) + 16 ADP + 16 phosphate + 6 H(+). Functionally, the key enzymatic reactions in nitrogen fixation are catalyzed by the nitrogenase complex, which has 2 components: the iron protein and the molybdenum-iron protein. This Parafrankia sp. (strain EAN1pec) protein is Nitrogenase iron protein.